A 590-amino-acid chain; its full sequence is Regulatory solute carrier protein family 1 member 1 (590 aa).

Disordered regions lie at residues 1–116, 144–234, 277–331, and 359–466; these read MSSS…TQGL, EEGW…PDSE, SPSS…AEES, and EEVT…SHRT. Polar residues predominate over residues 16–35; the sequence is SSGQSPEAGNPTSLARSVSA. A compositionally biased stretch (low complexity) spans 78–91; that stretch reads SPCAAAAAPSSAMP. A compositionally biased stretch (polar residues) spans 150–161; that stretch reads ENQNPSQVNDLQ. Basic and acidic residues-rich tracts occupy residues 162 to 179 and 188 to 203; these read QHQEPENARHEAGPRDAP and PGERQQKHEVADREAT. The span at 313-331 shows a compositional bias: low complexity; sequence SSSSVCGSSQPPAESAEES. Polar residues predominate over residues 362–376; sequence TCQSEGTAWGQTRVN. Basic and acidic residues-rich tracts occupy residues 380-395 and 404-420; these read RWTESERRTQDEDRPQ and VKTEKLTDASPDTRIED. Residues 451-465 are compositionally biased toward polar residues; sequence SVTVTSAETSNQSHR. In terms of domain architecture, UBA spans 544-584; that stretch reads GFPAADIDRILRAGFTLQEALGALHRVGGNADLALLVLLAK.

As to quaternary structure, interacts with YRDC. As to expression, highly expressed in renal outer medulla, renal inner medulla, duodenum, ileum and jejunum. Moderately expressed in renal outer cortex, renal papilla, brain and liver.

The protein localises to the cell membrane. The protein resides in the nucleus. It is found in the golgi apparatus. Its subcellular location is the trans-Golgi network. Mediates transcriptional and post-transcriptional regulation of SLC5A1. Inhibits a dynamin and PKC-dependent exocytotic pathway of SLC5A1. Also involved in transcriptional regulation of SLC22A2. Exhibits glucose-dependent, short-term inhibition of SLC5A1 and SLC22A2 by inhibiting the release of vesicles from the trans-Golgi network. The polypeptide is Regulatory solute carrier protein family 1 member 1 (RSC1A1) (Oryctolagus cuniculus (Rabbit)).